A 294-amino-acid chain; its full sequence is N-acetylmuramic acid 6-phosphate etherase (294 aa).

The region spanning 54–217 (VIQSFEEEGR…STASMIGVGK (164 aa)) is the SIS domain. Residue Glu-82 is the Proton donor of the active site. Glu-113 is an active-site residue.

The protein belongs to the GCKR-like family. MurNAc-6-P etherase subfamily. In terms of assembly, homodimer.

The catalysed reaction is N-acetyl-D-muramate 6-phosphate + H2O = N-acetyl-D-glucosamine 6-phosphate + (R)-lactate. It functions in the pathway amino-sugar metabolism; N-acetylmuramate degradation. Functionally, specifically catalyzes the cleavage of the D-lactyl ether substituent of MurNAc 6-phosphate, producing GlcNAc 6-phosphate and D-lactate. In Bacillus thuringiensis subsp. konkukian (strain 97-27), this protein is N-acetylmuramic acid 6-phosphate etherase.